Consider the following 258-residue polypeptide: UPF0246 protein VV1_0535 (258 aa).

The protein belongs to the UPF0246 family.

This is UPF0246 protein VV1_0535 from Vibrio vulnificus (strain CMCP6).